A 164-amino-acid polypeptide reads, in one-letter code: Ribosome maturation factor RimP (164 aa).

This sequence belongs to the RimP family.

It localises to the cytoplasm. Its function is as follows. Required for maturation of 30S ribosomal subunits. This is Ribosome maturation factor RimP from Mesoplasma florum (strain ATCC 33453 / NBRC 100688 / NCTC 11704 / L1) (Acholeplasma florum).